A 44-amino-acid polypeptide reads, in one-letter code: Protein PsbN (44 aa).

A helical membrane pass occupies residues 7–29 (FFTTFLGCLLLSITGYSIYVGFG).

The protein belongs to the PsbN family.

Its subcellular location is the plastid. The protein resides in the chloroplast thylakoid membrane. In terms of biological role, may play a role in photosystem I and II biogenesis. The polypeptide is Protein PsbN (Pleurastrum terricola (Filamentous green alga)).